Consider the following 644-residue polypeptide: Exoribonuclease 2 (644 aa).

The region spanning 189-516 (REDLTALDFV…NHRLLKAVIK (328 aa)) is the RNB domain. One can recognise an S1 motif domain in the interval 561 to 643 (DTRFAAEIVD…ETRSIIARPV (83 aa)).

Belongs to the RNR ribonuclease family. RNase II subfamily.

The protein localises to the cytoplasm. It carries out the reaction Exonucleolytic cleavage in the 3'- to 5'-direction to yield nucleoside 5'-phosphates.. Involved in mRNA degradation. Hydrolyzes single-stranded polyribonucleotides processively in the 3' to 5' direction. In Escherichia coli O6:K15:H31 (strain 536 / UPEC), this protein is Exoribonuclease 2.